The following is a 119-amino-acid chain: Beta-2-microglobulin (119 aa).

The N-terminal stretch at M1–A20 is a signal peptide. The 90-residue stretch at P25 to K114 folds into the Ig-like C1-type domain. C45 and C100 are oxidised to a cystine.

Belongs to the beta-2-microglobulin family. Heterodimer of an alpha chain and a beta chain. Beta-2-microglobulin is the beta-chain of major histocompatibility complex class I molecules.

It localises to the secreted. Its function is as follows. Component of the class I major histocompatibility complex (MHC). Involved in the presentation of peptide antigens to the immune system. The protein is Beta-2-microglobulin (B2M) of Plecturocebus moloch (Dusky titi monkey).